The primary structure comprises 682 residues: MSTIPVIEKRERADAKLFDGAVLLAAMRAAFLKLTPRHLLRSPVMAVVMGGTLLAAVITASGHGNAGFGWAVTAILFVTVLFGNFAEAIAEARGRGQAASLRRARKDLVARRVETALGGRETRVPAAELRPGDFVLVSEGEFVPADGEIVRGLATINEAAVTGESAPVLREAGTDRSGVIGGTRVLSDEIVFKVTAEPGQSFLDRMIALVEGANRQKTPNEIALTLLLAAMTLTFLIVVASLPAIAGFVGVTLDPLLLIALLVCLIPTTIGGLLPAIGIAGMNRAMSANVLAKSGKAVEVAGDVDVLLLDKTGTITYGDRQATVFHPLAGIDRAQLRDAAMLASLADPTPEGKSIVKLARQQGAVAVEPEDAHFIAFTAQTRMSGVDLAGRNIRKGAGDAIVAYVQAQGATVSPELNGRIEEVARGGATPLVVAEGRHVLGVVELSDVVKQGIKEKFAQLRAMGIKTVMITGDNPLTAAAIAAEAGVDDYIAQARPEDKLARIRAEQAGGRLVAMVGDGTNDAPALAQADVGLAMNSGTQAAKEAGNMVDLDSDPAKLLAVVEVGKQQLITRGALTTFSLANDVSKYFAILPALFAAAIPSMAALNVMHLSSPRHAVLAALIFNALIIPALIPLALRGVRFRPSSATALLRRNMLIYGLGGVLLPFAAIKLIDLALVATLGA.

4 helical membrane passes run 44-64, 66-86, 233-253, and 257-277; these read VMAV…SGHG, AGFG…GNFA, LTFL…GVTL, and LLIA…LPAI. Residue Asp310 is the 4-aspartylphosphate intermediate of the active site. ATP contacts are provided by residues Asp347, Glu351, 377-384, and Lys395; that span reads FTAQTRMS. Positions 518 and 522 each coordinate Mg(2+). 3 consecutive transmembrane segments (helical) span residues 588–608, 616–636, and 658–678; these read FAIL…LNVM, AVLA…PLAL, and GLGG…ALVA.

Belongs to the cation transport ATPase (P-type) (TC 3.A.3) family. Type IA subfamily. In terms of assembly, the system is composed of three essential subunits: KdpA, KdpB and KdpC.

Its subcellular location is the cell inner membrane. It carries out the reaction K(+)(out) + ATP + H2O = K(+)(in) + ADP + phosphate + H(+). Its function is as follows. Part of the high-affinity ATP-driven potassium transport (or Kdp) system, which catalyzes the hydrolysis of ATP coupled with the electrogenic transport of potassium into the cytoplasm. This subunit is responsible for energy coupling to the transport system and for the release of the potassium ions to the cytoplasm. This Xanthomonas campestris pv. campestris (strain ATCC 33913 / DSM 3586 / NCPPB 528 / LMG 568 / P 25) protein is Potassium-transporting ATPase ATP-binding subunit.